A 484-amino-acid chain; its full sequence is Acetyl-coenzyme A carboxylase carboxyl transferase subunit beta, chloroplastic (484 aa).

A CoA carboxyltransferase N-terminal domain is found at 223–484 (LWIQCDNCYG…LHAFFPLNKN (262 aa)). Cysteine 227, cysteine 230, cysteine 243, and cysteine 246 together coordinate Zn(2+). The segment at 227–246 (CDNCYGLMYKKVKMNVCEQC) adopts a C4-type zinc-finger fold.

Belongs to the AccD/PCCB family. Acetyl-CoA carboxylase is a heterohexamer composed of biotin carboxyl carrier protein, biotin carboxylase and 2 subunits each of ACCase subunit alpha and ACCase plastid-coded subunit beta (accD). Zn(2+) is required as a cofactor.

It localises to the plastid. The protein resides in the chloroplast stroma. The enzyme catalyses N(6)-carboxybiotinyl-L-lysyl-[protein] + acetyl-CoA = N(6)-biotinyl-L-lysyl-[protein] + malonyl-CoA. The protein operates within lipid metabolism; malonyl-CoA biosynthesis; malonyl-CoA from acetyl-CoA: step 1/1. Its function is as follows. Component of the acetyl coenzyme A carboxylase (ACC) complex. Biotin carboxylase (BC) catalyzes the carboxylation of biotin on its carrier protein (BCCP) and then the CO(2) group is transferred by the transcarboxylase to acetyl-CoA to form malonyl-CoA. This is Acetyl-coenzyme A carboxylase carboxyl transferase subunit beta, chloroplastic from Crucihimalaya wallichii (Rock-cress).